A 243-amino-acid polypeptide reads, in one-letter code: 23S rRNA (guanosine-2'-O-)-methyltransferase RlmB (243 aa).

S-adenosyl-L-methionine contacts are provided by G196, I216, and L225.

Belongs to the class IV-like SAM-binding methyltransferase superfamily. RNA methyltransferase TrmH family. RlmB subfamily. In terms of assembly, homodimer.

Its subcellular location is the cytoplasm. It catalyses the reaction guanosine(2251) in 23S rRNA + S-adenosyl-L-methionine = 2'-O-methylguanosine(2251) in 23S rRNA + S-adenosyl-L-homocysteine + H(+). In terms of biological role, specifically methylates the ribose of guanosine 2251 in 23S rRNA. This is 23S rRNA (guanosine-2'-O-)-methyltransferase RlmB from Salmonella typhi.